The chain runs to 1140 residues: Eukaryotic translation initiation factor 3 subunit A (1140 aa).

Residues 319–502 enclose the PCI domain; sequence LQRMAAHVLL…NSIYFGTDLT (184 aa). Composition is skewed to basic and acidic residues over residues 589 to 624, 830 to 900, and 921 to 984; these read QNNAREEEEARRQEEESRKAKLAEQKRLEQEQEERE, AAEE…RGGD, and ERND…EPDS. 2 disordered regions span residues 589 to 632 and 830 to 1140; these read QNNA…QNEI and AAEE…VKRR. Residues 987–998 show a composition bias toward low complexity; the sequence is AAGAKDAGGAPA. Basic and acidic residues-rich tracts occupy residues 999–1050, 1058–1086, and 1109–1130; these read SRDD…EPQR, DAPRQSDRDNRRPGGERRDRDGRDVRGDQ, and PRDEKPAAKRDQPQDKENKGGD.

This sequence belongs to the eIF-3 subunit A family. In terms of assembly, component of the eukaryotic translation initiation factor 3 (eIF-3) complex. The eIF-3 complex interacts with pix.

The protein localises to the cytoplasm. Its function is as follows. RNA-binding component of the eukaryotic translation initiation factor 3 (eIF-3) complex, which is involved in protein synthesis of a specialized repertoire of mRNAs and, together with other initiation factors, stimulates binding of mRNA and methionyl-tRNAi to the 40S ribosome. The eIF-3 complex specifically targets and initiates translation of a subset of mRNAs involved in cell proliferation. The polypeptide is Eukaryotic translation initiation factor 3 subunit A (Drosophila ananassae (Fruit fly)).